We begin with the raw amino-acid sequence, 246 residues long: Chanoclavine-I dehydrogenase easD (246 aa).

An N-terminal signal peptide occupies residues 1-20 (MASVSSKIFAITGGASGIGA). Residues Ile-18, Asp-66, Arg-132, Tyr-169, and Lys-173 each coordinate NADP(+). Residue Tyr-169 is the Proton donor of the active site. The active-site Lowers pKa of active site Tyr is Lys-173.

Belongs to the short-chain dehydrogenases/reductases (SDR) family. As to quaternary structure, homotetramer.

It carries out the reaction chanoclavine-I + NAD(+) = chanoclavine-I aldehyde + NADH + H(+). The protein operates within alkaloid biosynthesis; ergot alkaloid biosynthesis. Its function is as follows. Chanoclavine-I dehydrogenase; part of the gene cluster that mediates the biosynthesis of fungal ergot alkaloid. DmaW catalyzes the first step of ergot alkaloid biosynthesis by condensing dimethylallyl diphosphate (DMAP) and tryptophan to form 4-dimethylallyl-L-tryptophan. The second step is catalyzed by the methyltransferase easF that methylates 4-dimethylallyl-L-tryptophan in the presence of S-adenosyl-L-methionine, resulting in the formation of 4-dimethylallyl-L-abrine. The catalase easC and the FAD-dependent oxidoreductase easE then transform 4-dimethylallyl-L-abrine to chanoclavine-I which is further oxidized by easD in the presence of NAD(+), resulting in the formation of chanoclavine-I aldehyde. Chanoclavine-I aldehyde is the precursor of ergoamides and ergopeptines in Clavicipitaceae, and clavine-type alcaloids such as fumiclavine in Trichocomaceae. However, the metabolites downstream of chanoclavine-I aldehyde in Arthrodermataceae have not been identified yet. The polypeptide is Chanoclavine-I dehydrogenase easD (Arthroderma benhamiae (strain ATCC MYA-4681 / CBS 112371) (Trichophyton mentagrophytes)).